We begin with the raw amino-acid sequence, 356 residues long: Leucine-rich repeat and transmembrane domain-containing protein 1 (356 aa).

A signal peptide spans 1 to 32; the sequence is MLNEGLCCGAWAMKGTLLLVSSVGLLLPGVGS. Residues 33–62 form the LRRNT domain; that stretch reads CPMKCLCHPSSNSVDCSGQGLSKVPRDLPP. Topologically, residues 33–299 are extracellular; the sequence is CPMKCLCHPS…PTNLRHAVAT (267 aa). 5 LRR repeats span residues 63 to 84, 87 to 108, 111 to 132, 135 to 156, and 159 to 180; these read WTVTLLLQDNRIHWLPALAFQS, LLSTLNLSNNSLSNLAAEAFYG, HLRVLNVTQNSLLSIESSFAHA, GLRELDLSSNSLRILPTSLGKP, and NLTVFAVQQNHLLHLDRELLEA. Residues N92 and N116 are each glycosylated (N-linked (GlcNAc...) asparagine). Residue N159 is glycosylated (N-linked (GlcNAc...) asparagine). In terms of domain architecture, LRRCT spans 192–246; sequence NPWICDCHLLGLKLWLERFTFQGGETDGAICRLPEPWQGKALLSIPHELYQPCSL. Positions 255 to 277 are enriched in polar residues; it reads LVQQPGSAPQDAQKSHENSSGQQ. The tract at residues 255-288 is disordered; the sequence is LVQQPGSAPQDAQKSHENSSGQQDPLECEAKPKP. The helical transmembrane segment at 300 to 320 threads the bilayer; it reads VVITGVVCGIVCLMMLAAAIY. Residues 321–356 lie on the Cytoplasmic side of the membrane; sequence GCTYAAITAQYQGRPLASARKSEKMGSKELMDSSSA.

The protein localises to the membrane. This Mus musculus (Mouse) protein is Leucine-rich repeat and transmembrane domain-containing protein 1 (Lrtm1).